The primary structure comprises 611 residues: Methionine--tRNA ligase (611 aa).

A 'HIGH' region motif is present at residues 12 to 22 (PYANGPRHIGH). Zn(2+) is bound by residues cysteine 144, cysteine 147, cysteine 157, and cysteine 160. Positions 348–352 (KFSSS) match the 'KMSKS' region motif. Position 351 (serine 351) interacts with ATP.

Belongs to the class-I aminoacyl-tRNA synthetase family. MetG type 1 subfamily. As to quaternary structure, monomer. Zn(2+) serves as cofactor.

The protein resides in the cytoplasm. The enzyme catalyses tRNA(Met) + L-methionine + ATP = L-methionyl-tRNA(Met) + AMP + diphosphate. In terms of biological role, is required not only for elongation of protein synthesis but also for the initiation of all mRNA translation through initiator tRNA(fMet) aminoacylation. This chain is Methionine--tRNA ligase, found in Corynebacterium urealyticum (strain ATCC 43042 / DSM 7109).